Consider the following 543-residue polypeptide: Protein GPR108 (543 aa).

The first 32 residues, 1 to 32 (MAVSERRGLGRGSPAEWGQRLLLVLLLGGCSG), serve as a signal peptide directing secretion. N-linked (GlcNAc...) asparagine glycans are attached at residues Asn57 and Asn109. The tract at residues 149–186 (SKPGLPKPQATVPRKVDGGGTSAASKPKSTPAVIQGPS) is disordered. Residues Asn200, Asn204, and Asn228 are each glycosylated (N-linked (GlcNAc...) asparagine). A run of 7 helical transmembrane segments spans residues 263-283 (LYMVMSACFLAAGIFWVSILC), 292-312 (IHWLMAALAFTKSISLLFHSI), 336-356 (LLKGALLFITIALIGSGWAFI), 367-387 (VFGIVIPMQVLANVAYIIIES), 401-421 (ILFLVDLICCGAILFPVVWSI), 449-469 (VMVICYVYFTRIIAILLQVAV), and 473-493 (WQWLYQLLVEGSTLAFFVLTG). Asn534 carries N-linked (GlcNAc...) asparagine glycosylation.

The protein belongs to the LU7TM family.

The protein resides in the golgi apparatus. It localises to the cis-Golgi network membrane. It is found in the trans-Golgi network membrane. Its subcellular location is the golgi apparatus membrane. Its function is as follows. May play a role in intracellular immune modulation by activating NF-kappaB response and attenuating Toll-like-receptor response. In terms of biological role, (Microbial infection) Plays an essential function in adeno-associated virus (AAV) transduction across multiple serotypes except AAV5. May play a critical role in mediating the endosomal virus escape or in the AAV virions trafficking from endosomes to the nucleus. The polypeptide is Protein GPR108 (Homo sapiens (Human)).